We begin with the raw amino-acid sequence, 69 residues long: Conotoxin Gla-TxXI (69 aa).

A signal peptide spans 1–25 (MVRVTSVGCFLLVIVSLNLVVLTNA). Disulfide bonds link cysteine 26-cysteine 40, cysteine 33-cysteine 45, cysteine 39-cysteine 49, and cysteine 44-cysteine 53. 4-carboxyglutamate is present on glutamate 29. At proline 56 the chain carries Proline amide. The propeptide occupies 60–69 (AKLLEFFRQR).

In terms of processing, contains 4 disulfide bonds. In terms of tissue distribution, expressed by the venom duct.

It is found in the secreted. This Conus textile (Cloth-of-gold cone) protein is Conotoxin Gla-TxXI.